The following is a 417-amino-acid chain: Putative F-box protein At4g21240 (417 aa).

Acidic residues predominate over residues 1-12; that stretch reads MDRREEEEEETG. The interval 1–25 is disordered; it reads MDRREEEEEETGYGEKGTRNQSKED. Residues 16-25 show a composition bias toward basic and acidic residues; it reads KGTRNQSKED. One can recognise an F-box domain in the interval 30–76; it reads GKIFELIPLDMIPDILLRLPAKSAVRFRIVSKLWLSITTRPYFIRSF.

In Arabidopsis thaliana (Mouse-ear cress), this protein is Putative F-box protein At4g21240.